Consider the following 480-residue polypeptide: Probable histone deacetylase 1-B (480 aa).

Residues 10-321 (KVCYYYDGDV…WTYETAVALD (312 aa)) form a histone deacetylase region. His-141 is a catalytic residue. A disordered region spans residues 387 to 480 (DSVHDDSGEE…KRVKEETKSV (94 aa)). A compositionally biased stretch (basic and acidic residues) spans 401 to 416 (PDKRISIRSSDKRIAC). Acidic residues predominate over residues 417–427 (DEEFSDSEDEG). The segment covering 443-480 (VKTEEEKEGEDKKDVKEEEKAKDEKTDSKRVKEETKSV) has biased composition (basic and acidic residues).

The protein belongs to the histone deacetylase family. HD type 1 subfamily. In terms of assembly, found in a large complex with RBBP4 and MI-2.

Its subcellular location is the nucleus. The protein resides in the cytoplasm. The catalysed reaction is N(6)-acetyl-L-lysyl-[histone] + H2O = L-lysyl-[histone] + acetate. The enzyme catalyses N(6)-acetyl-L-lysyl-[protein] + H2O = L-lysyl-[protein] + acetate. It carries out the reaction N(6)-(2E)-butenoyl-L-lysyl-[protein] + H2O = (2E)-2-butenoate + L-lysyl-[protein]. In terms of biological role, histone deacetylase that catalyzes the deacetylation of lysine residues on the N-terminal part of the core histones (H2A, H2B, H3 and H4). Histone deacetylation gives a tag for epigenetic repression and plays an important role in transcriptional regulation, cell cycle progression and developmental events. Histone deacetylases act via the formation of large multiprotein complexes. Also functions as a deacetylase for non-histone proteins. In addition to protein deacetylase activity, also has protein-lysine deacylase activity: acts as a protein decrotonylase by mediating decrotonylation ((2E)-butenoyl) of histones. The protein is Probable histone deacetylase 1-B (hdac1-b) of Xenopus laevis (African clawed frog).